Here is a 150-residue protein sequence, read N- to C-terminus: MRAPLGPAEIRRLLPHRYPFLLVDRIEELEPGVRAVGVKNVTQNEPFFQGHFPGYPVMPGVLIVEAMAQVGAVGVMAVEEYRGRLALFAGIDGVRFRRQVVPGDALRMEVEIDRLRGRVGRGRGLAFVGGERACEAELMFAFAERGEESR.

Residue His-51 is part of the active site.

This sequence belongs to the thioester dehydratase family. FabZ subfamily.

Its subcellular location is the cytoplasm. It catalyses the reaction a (3R)-hydroxyacyl-[ACP] = a (2E)-enoyl-[ACP] + H2O. Functionally, involved in unsaturated fatty acids biosynthesis. Catalyzes the dehydration of short chain beta-hydroxyacyl-ACPs and long chain saturated and unsaturated beta-hydroxyacyl-ACPs. This chain is 3-hydroxyacyl-[acyl-carrier-protein] dehydratase FabZ, found in Rubrobacter xylanophilus (strain DSM 9941 / JCM 11954 / NBRC 16129 / PRD-1).